Reading from the N-terminus, the 381-residue chain is Sterol 24-C-methyltransferase ERG6A (381 aa).

Belongs to the class I-like SAM-binding methyltransferase superfamily. Erg6/SMT family.

It catalyses the reaction lanosterol + S-adenosyl-L-methionine = eburicol + S-adenosyl-L-homocysteine + H(+). It functions in the pathway steroid metabolism; ergosterol biosynthesis. Its function is as follows. Sterol 24-C-methyltransferase; part of the third module of ergosterol biosynthesis pathway that includes the late steps of the pathway. ERG6A and ERG6B methylate lanosterol at C-24 to produce eburicol. The third module or late pathway involves the ergosterol synthesis itself through consecutive reactions that mainly occur in the endoplasmic reticulum (ER) membrane. Firstly, the squalene synthase ERG9 catalyzes the condensation of 2 farnesyl pyrophosphate moieties to form squalene, which is the precursor of all steroids. Squalene synthase is crucial for balancing the incorporation of farnesyl diphosphate (FPP) into sterol and nonsterol isoprene synthesis. Secondly, squalene is converted into lanosterol by the consecutive action of the squalene epoxidase ERG1 and the lanosterol synthase ERG7. Then, the delta(24)-sterol C-methyltransferase ERG6 methylates lanosterol at C-24 to produce eburicol. Eburicol is the substrate of the sterol 14-alpha demethylase encoded by CYP51A, CYP51B and CYP51C, to yield 4,4,24-trimethyl ergosta-8,14,24(28)-trienol. CYP51B encodes the enzyme primarily responsible for sterol 14-alpha-demethylation, and plays an essential role in ascospore formation. CYP51A encodes an additional sterol 14-alpha-demethylase, induced on ergosterol depletion and responsible for the intrinsic variation in azole sensitivity. The third CYP51 isoform, CYP51C, does not encode a sterol 14-alpha-demethylase, but is required for full virulence on host wheat ears. The C-14 reductase ERG24 then reduces the C14=C15 double bond which leads to 4,4-dimethylfecosterol. A sequence of further demethylations at C-4, involving the C-4 demethylation complex containing the C-4 methylsterol oxidases ERG25, the sterol-4-alpha-carboxylate 3-dehydrogenase ERG26 and the 3-keto-steroid reductase ERG27, leads to the production of fecosterol via 4-methylfecosterol. ERG28 has a role as a scaffold to help anchor ERG25, ERG26 and ERG27 to the endoplasmic reticulum. The C-8 sterol isomerase ERG2 then catalyzes the reaction which results in unsaturation at C-7 in the B ring of sterols and thus converts fecosterol to episterol. The sterol-C5-desaturases ERG3A and ERG3BB then catalyze the introduction of a C-5 double bond in the B ring to produce 5-dehydroepisterol. The C-22 sterol desaturases ERG5A and ERG5B further convert 5-dehydroepisterol into ergosta-5,7,22,24(28)-tetraen-3beta-ol by forming the C-22(23) double bond in the sterol side chain. Finally, ergosta-5,7,22,24(28)-tetraen-3beta-ol is substrate of the C-24(28) sterol reductase ERG4 to produce ergosterol. The protein is Sterol 24-C-methyltransferase ERG6A (FG02783.1) of Gibberella zeae (strain ATCC MYA-4620 / CBS 123657 / FGSC 9075 / NRRL 31084 / PH-1) (Wheat head blight fungus).